A 561-amino-acid chain; its full sequence is DNA ligase B (561 aa).

Lys-125 functions as the N6-AMP-lysine intermediate in the catalytic mechanism.

The protein belongs to the NAD-dependent DNA ligase family. LigB subfamily.

The catalysed reaction is NAD(+) + (deoxyribonucleotide)n-3'-hydroxyl + 5'-phospho-(deoxyribonucleotide)m = (deoxyribonucleotide)n+m + AMP + beta-nicotinamide D-nucleotide.. In terms of biological role, catalyzes the formation of phosphodiester linkages between 5'-phosphoryl and 3'-hydroxyl groups in double-stranded DNA using NAD as a coenzyme and as the energy source for the reaction. The protein is DNA ligase B of Escherichia coli O127:H6 (strain E2348/69 / EPEC).